A 205-amino-acid polypeptide reads, in one-letter code: UPF0056 membrane protein MJ1677 (205 aa).

The next 6 membrane-spanning stretches (helical) occupy residues I7–I27, A49–I69, S70–V90, I112–M132, F145–A165, and G185–L205.

This sequence belongs to the UPF0056 (MarC) family.

The protein localises to the cell membrane. This Methanocaldococcus jannaschii (strain ATCC 43067 / DSM 2661 / JAL-1 / JCM 10045 / NBRC 100440) (Methanococcus jannaschii) protein is UPF0056 membrane protein MJ1677.